The following is a 265-amino-acid chain: Small ribosomal subunit protein uS2 (265 aa).

The disordered stretch occupies residues 231-265 (VEEEYEDYEGAEDDYEYDETEYTDSVIPDDEEEAE).

It belongs to the universal ribosomal protein uS2 family.

The chain is Small ribosomal subunit protein uS2 from Trichormus variabilis (strain ATCC 29413 / PCC 7937) (Anabaena variabilis).